The following is a 26-amino-acid chain: Melittin (26 aa).

Gly-1 is modified (N-formylglycine; partial). Glu-26 is subject to Glutamic acid 1-amide.

The protein belongs to the melittin family. In terms of assembly, monomer (in solution and for integration into membranes), homotetramer (in solution and potentially as a toroidal pore in membranes), and potenially homomultimer (as a toroidal pore in membranes). As to expression, expressed by the venom gland.

The protein localises to the secreted. The protein resides in the target cell membrane. Functionally, main toxin of bee venom with strong hemolytic activity and antimicrobial activity. It has enhancing effects on bee venom phospholipase A2 activity. This amphipathic toxin binds to negatively charged membrane surface and forms pore by inserting into lipid bilayers inducing the leakage of ions and molecules and the enhancement of permeability that ultimately leads to cell lysis. It acts as a voltage-gated pore with higher selectivity for anions over cations. The ion conductance has been shown to be voltage-dependent. Self-association of melittin in membranes is promoted by high ionic strength, but not by the presence of negatively charged lipids. In vivo, intradermal injection into healthy human volunteers produce sharp pain sensation and an inflammatory response. It produces pain by activating primary nociceptor cells directly and indirectly due to its ability to activate plasma membrane phospholipase A2 and its pore-forming activity. The chain is Melittin (MELT) from Apis dorsata (Giant honeybee).